The sequence spans 162 residues: Caveolin-2 (162 aa).

Over 1–86 (MGLETEKADA…FEVSKYLIYK (86 aa)) the chain is Cytoplasmic. Tyrosine 19 carries the post-translational modification Phosphotyrosine; by SRC. Positions 19–40 (YSRHSGLGYPEPEKCAKSTQDR) are disordered. Residues serine 20 and serine 23 each carry the phosphoserine modification. Tyrosine 27 is modified (phosphotyrosine; by SRC). Over residues 29 to 40 (EPEKCAKSTQDR) the composition is skewed to basic and acidic residues. At serine 36 the chain carries Phosphoserine. Residues 87–107 (VLTVLLAIPLAFVAGILFATL) constitute an intramembrane region (helical). Over 108–162 (SCLHIWIVVPFVKTCLMVLPSVQTVWHSITDGFIAPLYKSMGLIFSSISLRLSPE) the chain is Cytoplasmic.

Belongs to the caveolin family. As to quaternary structure, monomer or homodimer. Interacts with CAV1; the interaction forms a stable heterooligomeric complex that is required for targeting to lipid rafts and for caveolae formation. Tyrosine phosphorylated forms do not form heterooligomers with the Tyr-19-phosphorylated form existing as a monomer or dimer, and the Tyr-27-form as a monomer only. Interacts (tyrosine phosphorylated form) with the SH2 domain-containing proteins, RASA1, NCK1 and SRC. Interacts (tyrosine phosphorylated form) with INSR, the interaction (Tyr-27-phosphorylated form) is increased on insulin stimulation. Interacts (Tyr-19 phosphorylated form) with MAPK1 (phosphorylated form); the interaction, promoted by insulin, leads to nuclear location and MAPK1 activation. Interacts with STAT3; the interaction is increased on insulin-induced tyrosine phosphorylation leading to STAT activation. Post-translationally, phosphorylated on serine and tyrosine residues. CAV1 promotes phosphorylation on Ser-23 which then targets the complex to the plasma membrane, lipid rafts and caveolae. Phosphorylation on Ser-36 appears to modulate mitosis in endothelial cells. Phosphorylation on both Tyr-19 and Tyr-27 is required for insulin-induced 'Ser-727' phosphorylation of STAT3 and its activation. Phosphorylation on Tyr-19 is required for insulin-induced phosphorylation of MAPK1 and DNA binding of STAT3. Tyrosine phosphorylation is induced by both EGF and insulin (By. similarity).

The protein resides in the nucleus. Its subcellular location is the cytoplasm. It localises to the golgi apparatus membrane. The protein localises to the cell membrane. It is found in the membrane. The protein resides in the caveola. Functionally, may act as a scaffolding protein within caveolar membranes. Interacts directly with G-protein alpha subunits and can functionally regulate their activity. Acts as an accessory protein in conjunction with CAV1 in targeting to lipid rafts and driving caveolae formation. The Ser-36 phosphorylated form has a role in modulating mitosis in endothelial cells. Positive regulator of cellular mitogenesis of the MAPK signaling pathway. Required for the insulin-stimulated nuclear translocation and activation of MAPK1 and STAT3, and the subsequent regulation of cell cycle progression. The protein is Caveolin-2 (CAV2) of Didelphis virginiana (North American opossum).